The following is a 709-amino-acid chain: DNA ligase (709 aa).

NAD(+) contacts are provided by residues 34-38, 83-84, and Glu-115; these read DAEYD and SL. Lys-117 functions as the N6-AMP-lysine intermediate in the catalytic mechanism. 4 residues coordinate NAD(+): Arg-138, Glu-185, Lys-301, and Lys-325. Positions 419, 422, 437, and 443 each coordinate Zn(2+). The region spanning 602-691 is the BRCT domain; it reads RQSDTLAGKT…AEPPPSPPPP (90 aa). The interval 679–709 is disordered; sequence GTTAEPPPSPPPPPPETNTDGNQLLLPLDGE. A compositionally biased stretch (pro residues) spans 683–694; it reads EPPPSPPPPPPE.

This sequence belongs to the NAD-dependent DNA ligase family. LigA subfamily. It depends on Mg(2+) as a cofactor. Mn(2+) is required as a cofactor.

It carries out the reaction NAD(+) + (deoxyribonucleotide)n-3'-hydroxyl + 5'-phospho-(deoxyribonucleotide)m = (deoxyribonucleotide)n+m + AMP + beta-nicotinamide D-nucleotide.. Its function is as follows. DNA ligase that catalyzes the formation of phosphodiester linkages between 5'-phosphoryl and 3'-hydroxyl groups in double-stranded DNA using NAD as a coenzyme and as the energy source for the reaction. It is essential for DNA replication and repair of damaged DNA. The protein is DNA ligase of Chloroflexus aurantiacus (strain ATCC 29364 / DSM 637 / Y-400-fl).